Consider the following 185-residue polypeptide: Ribosome-recycling factor (185 aa).

Belongs to the RRF family.

The protein localises to the cytoplasm. Responsible for the release of ribosomes from messenger RNA at the termination of protein biosynthesis. May increase the efficiency of translation by recycling ribosomes from one round of translation to another. The protein is Ribosome-recycling factor of Streptococcus equi subsp. equi (strain 4047).